The chain runs to 774 residues: Acetyl-CoA decarbonylase/synthase complex subunit alpha (774 aa).

[4Fe-4S] cluster contacts are provided by Cys73, Cys76, Cys77, Cys79, Cys84, and Cys94. CO is bound at residue His117. Residues His251, Cys279, and Cys318 each coordinate [Ni-4Fe-4S] cluster. 2 4Fe-4S ferredoxin-type domains span residues 398-427 (LNEV…VKEA) and 436-466 (FKGF…VSMT). Positions 408, 411, 414, 418, 446, 449, 452, and 456 each coordinate [4Fe-4S] cluster. [Ni-4Fe-4S] cluster-binding residues include Cys514, Cys543, and Cys578.

The protein belongs to the Ni-containing carbon monoxide dehydrogenase family. In terms of assembly, heterotetramer of two alpha and two epsilon subunits. The ACDS complex is made up of alpha, epsilon, beta, gamma and delta subunits with a probable stoichiometry of (alpha(2)epsilon(2))(4)-beta(8)-(gamma(1)delta(1))(8). The cofactor is [4Fe-4S] cluster. It depends on [Ni-4Fe-4S] cluster as a cofactor.

It carries out the reaction CO + 2 oxidized [2Fe-2S]-[ferredoxin] + H2O = 2 reduced [2Fe-2S]-[ferredoxin] + CO2 + 2 H(+). Functionally, part of the ACDS complex that catalyzes the reversible cleavage of acetyl-CoA, allowing autotrophic growth from CO(2). The alpha-epsilon subcomponent functions as a carbon monoxide dehydrogenase. This is Acetyl-CoA decarbonylase/synthase complex subunit alpha from Methanocaldococcus jannaschii (strain ATCC 43067 / DSM 2661 / JAL-1 / JCM 10045 / NBRC 100440) (Methanococcus jannaschii).